Here is an 82-residue protein sequence, read N- to C-terminus: Small ribosomal subunit protein bS16 (82 aa).

The protein belongs to the bacterial ribosomal protein bS16 family.

In Yersinia pseudotuberculosis serotype O:1b (strain IP 31758), this protein is Small ribosomal subunit protein bS16.